We begin with the raw amino-acid sequence, 690 residues long: DNA ligase (690 aa).

Residues 49–53, 98–99, and glutamate 129 contribute to the NAD(+) site; these read DAEYD and SL. Lysine 131 serves as the catalytic N6-AMP-lysine intermediate. The NAD(+) site is built by arginine 152, glutamate 191, lysine 308, and lysine 332. Residues cysteine 426, cysteine 429, cysteine 444, and cysteine 450 each contribute to the Zn(2+) site. The BRCT domain occupies 607–690; it reads EDAARLEGLT…ALLREQGIDA (84 aa).

This sequence belongs to the NAD-dependent DNA ligase family. LigA subfamily. The cofactor is Mg(2+). It depends on Mn(2+) as a cofactor.

The catalysed reaction is NAD(+) + (deoxyribonucleotide)n-3'-hydroxyl + 5'-phospho-(deoxyribonucleotide)m = (deoxyribonucleotide)n+m + AMP + beta-nicotinamide D-nucleotide.. Functionally, DNA ligase that catalyzes the formation of phosphodiester linkages between 5'-phosphoryl and 3'-hydroxyl groups in double-stranded DNA using NAD as a coenzyme and as the energy source for the reaction. It is essential for DNA replication and repair of damaged DNA. The sequence is that of DNA ligase from Salinibacter ruber (strain DSM 13855 / M31).